We begin with the raw amino-acid sequence, 236 residues long: Protein Thf1 (236 aa).

A coiled-coil region spans residues 180-220; that stretch reads PVEKMQKDLEQYRSNLEKMTQARKTLEDIVAAERKRRQQNA. The tract at residues 206 to 236 is disordered; the sequence is EDIVAAERKRRQQNAAPDRSPESASATEAPN. A compositionally biased stretch (polar residues) spans 227-236; sequence ESASATEAPN.

This sequence belongs to the THF1 family.

Its function is as follows. May be involved in photosynthetic membrane biogenesis. In Cyanothece sp. (strain PCC 7425 / ATCC 29141), this protein is Protein Thf1.